The following is a 312-amino-acid chain: Pantothenate kinase (312 aa).

97-104 is an ATP binding site; it reads GSVAVGKS.

The protein belongs to the prokaryotic pantothenate kinase family.

The protein resides in the cytoplasm. It carries out the reaction (R)-pantothenate + ATP = (R)-4'-phosphopantothenate + ADP + H(+). Its pathway is cofactor biosynthesis; coenzyme A biosynthesis; CoA from (R)-pantothenate: step 1/5. The polypeptide is Pantothenate kinase (Mycolicibacterium gilvum (strain PYR-GCK) (Mycobacterium gilvum (strain PYR-GCK))).